Reading from the N-terminus, the 184-residue chain is Ribosome-recycling factor (184 aa).

Belongs to the RRF family.

Its subcellular location is the cytoplasm. Its function is as follows. Responsible for the release of ribosomes from messenger RNA at the termination of protein biosynthesis. May increase the efficiency of translation by recycling ribosomes from one round of translation to another. The protein is Ribosome-recycling factor of Agathobacter rectalis (strain ATCC 33656 / DSM 3377 / JCM 17463 / KCTC 5835 / VPI 0990) (Eubacterium rectale).